A 306-amino-acid chain; its full sequence is Acetyl-coenzyme A carboxylase carboxyl transferase subunit beta (306 aa).

A CoA carboxyltransferase N-terminal domain is found at leucine 25–threonine 294. Residues phenylalanine 286–alanine 306 are disordered. Low complexity predominate over residues proline 288–alanine 306.

Belongs to the AccD/PCCB family. As to quaternary structure, acetyl-CoA carboxylase is a heterohexamer composed of biotin carboxyl carrier protein (AccB), biotin carboxylase (AccC) and two subunits each of ACCase subunit alpha (AccA) and ACCase subunit beta (AccD).

It is found in the cytoplasm. The catalysed reaction is N(6)-carboxybiotinyl-L-lysyl-[protein] + acetyl-CoA = N(6)-biotinyl-L-lysyl-[protein] + malonyl-CoA. It functions in the pathway lipid metabolism; malonyl-CoA biosynthesis; malonyl-CoA from acetyl-CoA: step 1/1. In terms of biological role, component of the acetyl coenzyme A carboxylase (ACC) complex. Biotin carboxylase (BC) catalyzes the carboxylation of biotin on its carrier protein (BCCP) and then the CO(2) group is transferred by the transcarboxylase to acetyl-CoA to form malonyl-CoA. The sequence is that of Acetyl-coenzyme A carboxylase carboxyl transferase subunit beta from Bartonella grahamii (strain as4aup).